We begin with the raw amino-acid sequence, 350 residues long: Deoxyhypusine synthase-like protein (350 aa).

Belongs to the deoxyhypusine synthase family.

The polypeptide is Deoxyhypusine synthase-like protein (Chlorobaculum tepidum (strain ATCC 49652 / DSM 12025 / NBRC 103806 / TLS) (Chlorobium tepidum)).